The sequence spans 88 residues: UPF0335 protein M446_5200 (88 aa).

Belongs to the UPF0335 family.

The polypeptide is UPF0335 protein M446_5200 (Methylobacterium sp. (strain 4-46)).